The primary structure comprises 98 residues: NADH-ubiquinone oxidoreductase chain 4L (98 aa).

3 consecutive transmembrane segments (helical) span residues 1-21 (MPSI…GMLV), 29-49 (SLLC…LTAL), and 61-81 (IILL…LVMV).

Belongs to the complex I subunit 4L family. As to quaternary structure, core subunit of respiratory chain NADH dehydrogenase (Complex I) which is composed of 45 different subunits.

The protein resides in the mitochondrion inner membrane. It catalyses the reaction a ubiquinone + NADH + 5 H(+)(in) = a ubiquinol + NAD(+) + 4 H(+)(out). Core subunit of the mitochondrial membrane respiratory chain NADH dehydrogenase (Complex I) which catalyzes electron transfer from NADH through the respiratory chain, using ubiquinone as an electron acceptor. Part of the enzyme membrane arm which is embedded in the lipid bilayer and involved in proton translocation. The sequence is that of NADH-ubiquinone oxidoreductase chain 4L (MT-ND4L) from Oryctolagus cuniculus (Rabbit).